Reading from the N-terminus, the 441-residue chain is Transcriptional regulatory protein ZraR (441 aa).

Residues 7-121 (DILVVDDDIS…NLQATLEKAL (115 aa)) form the Response regulatory domain. Asp56 is subject to 4-aspartylphosphate. Positions 141–370 (MVGKSPAMQH…LENAVERAVV (230 aa)) constitute a Sigma-54 factor interaction domain. ATP contacts are provided by Gly172, Thr173, Arg329, and Arg359. Positions 421-440 (KTEAARQLGITRKTLLAKLS) form a DNA-binding region, H-T-H motif.

As to quaternary structure, monomer. Phosphorylated by ZraS.

The protein localises to the cytoplasm. With respect to regulation, activity of the ZraS/ZraR two-component system is repressed by the zinc-bound form of ZraP, which probably interacts with the periplasmic region of ZraS. In terms of biological role, part of the Zra signaling pathway, an envelope stress response (ESR) system composed of the periplasmic accessory protein ZraP, the histidine kinase ZraS and the transcriptional regulator ZraR. The ZraPSR system contributes to antibiotic resistance and is important for membrane integrity in the presence of membrane-targeting biocides. ZraR is a member of the two-component regulatory system ZraS/ZraR. When activated by ZraS, acts in conjunction with sigma-54 to regulate the expression of zraP in the presence of high Zn(2+) or Pb(2+) concentrations. Also positively autoregulates the expression of the zraSR operon. Binds to a region within the zraP-zraSR intergenic region that is characterized by two inverted repeats separated by a 14 bp spacer. In addition, controls a regulon of genes of diverse functions that may be critical to maintain envelope integrity and cell survival under stressful conditions. The system has no direct role in zinc or copper resistance. This chain is Transcriptional regulatory protein ZraR, found in Escherichia coli (strain K12).